The primary structure comprises 132 residues: Cytochrome c' (132 aa).

Residues Arg-10, Gln-11, Asp-65, Cys-122, Cys-125, and His-126 each coordinate heme c.

Binds 1 heme c group covalently per subunit.

In terms of biological role, cytochrome c' is the most widely occurring bacterial c-type cytochrome. Cytochromes c' are high-spin proteins and the heme has no sixth ligand. Their exact function is not known. The protein is Cytochrome c' of Halomonas halodenitrificans (strain ATCC 12084 / NCIMB 8669) (Paracoccus halodenitrificans).